A 343-amino-acid polypeptide reads, in one-letter code: Heat-inducible transcription repressor HrcA (343 aa).

This sequence belongs to the HrcA family.

Its function is as follows. Negative regulator of class I heat shock genes (grpE-dnaK-dnaJ and groELS operons). Prevents heat-shock induction of these operons. The chain is Heat-inducible transcription repressor HrcA from Alkaliphilus metalliredigens (strain QYMF).